A 402-amino-acid chain; its full sequence is F-box/kelch-repeat protein At4g39590 (402 aa).

The span at 1 to 14 (MFPMSSTSRSSAAN) shows a compositional bias: low complexity. Residues 1–37 (MFPMSSTSRSSAANNRKDPPRKKNKETPSPVTREPTS) are disordered. Residues 27–37 (TPSPVTREPTS) are compositionally biased toward polar residues. An F-box domain is found at 35–81 (PTSIDSLPNDLLLNCFARVSRMYYPALSRVSKRFRSIVTSPEIYNTR). Kelch repeat units follow at residues 143-198 (NIYR…VVDG), 199-246 (KIYV…YRRA), 255-300 (KLYL…LFYW), and 302-341 (QGVF…DLGG).

In Arabidopsis thaliana (Mouse-ear cress), this protein is F-box/kelch-repeat protein At4g39590.